The primary structure comprises 341 residues: Protein BEARSKIN2 (341 aa).

Positions 9–160 (VPPGFRFHPT…GWVVCRVFMK (152 aa)) constitute an NAC domain. Residues 109–166 (IGMRKTLVFYKGRAPHGQKTDWIMHEYRLEDADDPQANPSEDGWVVCRVFMKKNLFKV) mediate DNA binding.

Expressed throughout the root cap, in both columella (COL) and lateral root cap (LRC) cells, with higher levels in the COL-adjoining LRC than the upper LRC. Also present at low levels expression in the tips of cotyledons and the cotyledon vasculature, as weel as in vasculature of the first pair of true leaves and at the hydathodes.

It is found in the nucleus. In terms of biological role, transcription activator. Together with BRN1 and SMB, regulates cellular maturation of root cap. Promotes the expression of genes involved in secondary cell walls (SCW) biosynthesis. The sequence is that of Protein BEARSKIN2 (BRN2) from Arabidopsis thaliana (Mouse-ear cress).